Consider the following 348-residue polypeptide: A-type ATP synthase subunit C (348 aa).

Belongs to the V-ATPase V0D/AC39 subunit family. Has multiple subunits with at least A(3), B(3), C, D, E, F, H, I and proteolipid K(x).

It localises to the cell membrane. In terms of biological role, component of the A-type ATP synthase that produces ATP from ADP in the presence of a proton gradient across the membrane. This is A-type ATP synthase subunit C from Halorubrum lacusprofundi (strain ATCC 49239 / DSM 5036 / JCM 8891 / ACAM 34).